Consider the following 244-residue polypeptide: 7-cyano-7-deazaguanine synthase (244 aa).

14–24 (FSGGQDSATCV) provides a ligand contact to ATP. Zn(2+) is bound by residues Cys-202, Cys-217, Cys-220, and Cys-223.

The protein belongs to the QueC family. Zn(2+) serves as cofactor.

It carries out the reaction 7-carboxy-7-deazaguanine + NH4(+) + ATP = 7-cyano-7-deazaguanine + ADP + phosphate + H2O + H(+). It functions in the pathway purine metabolism; 7-cyano-7-deazaguanine biosynthesis. Catalyzes the ATP-dependent conversion of 7-carboxy-7-deazaguanine (CDG) to 7-cyano-7-deazaguanine (preQ(0)). The polypeptide is 7-cyano-7-deazaguanine synthase (Burkholderia thailandensis (strain ATCC 700388 / DSM 13276 / CCUG 48851 / CIP 106301 / E264)).